We begin with the raw amino-acid sequence, 448 residues long: Probable tryptophanase (448 aa).

An N6-(pyridoxal phosphate)lysine modification is found at Lys-253.

This sequence belongs to the beta-eliminating lyase family. It depends on pyridoxal 5'-phosphate as a cofactor.

The enzyme catalyses L-tryptophan + H2O = indole + pyruvate + NH4(+). It functions in the pathway amino-acid degradation; L-tryptophan degradation via pyruvate pathway; indole and pyruvate from L-tryptophan: step 1/1. The sequence is that of Probable tryptophanase from Halobacterium salinarum (strain ATCC 29341 / DSM 671 / R1).